Reading from the N-terminus, the 266-residue chain is MWYSIRNNQRMALIKQGYKILAEYRLVQDHLKNIYAIPSYASGLHWFGVIFVHSGIYAGSMFRFSILLPENFPDDTILPTVIFNAAIFHPHICPHSKSLDLGPCFKEWRKDQHHIWHLLRYIQAVFADPEGSICTGKSPSGDLVVLDEVNNLEALNMLAKSRPEYIKRIQELAISSRRHMYDKPMIEDPHYIIVEPYCAERHLRFMEQLKSPSWREATCEDDSPPAELLGHIDSSRQLDEDEANQRGKLQAATTDLQHGARCSVAQ.

One can recognise a UBC core domain in the interval 15–178 (KQGYKILAEY…IQELAISSRR (164 aa)). A disordered region spans residues 216–266 (EATCEDDSPPAELLGHIDSSRQLDEDEANQRGKLQAATTDLQHGARCSVAQ).

The protein belongs to the ubiquitin-conjugating enzyme family. FTS subfamily.

The sequence is that of Protein crossbronx-like from Drosophila ananassae (Fruit fly).